The primary structure comprises 276 residues: Proteasome subunit beta type-8 (276 aa).

Residues M1 to G72 constitute a propeptide, removed in mature form. T73 acts as the Nucleophile in catalysis.

It belongs to the peptidase T1B family. As to quaternary structure, the 26S proteasome consists of a 20S proteasome core and two 19S regulatory subunits. The 20S proteasome core is composed of 28 subunits that are arranged in four stacked rings, resulting in a barrel-shaped structure. The two end rings are each formed by seven alpha subunits, and the two central rings are each formed by seven beta subunits. The catalytic chamber with the active sites is on the inside of the barrel. Component of the immunoproteasome, where it displaces the equivalent housekeeping subunit PSMB5. Component of the spermatoproteasome, a form of the proteasome specifically found in testis. Directly interacts with POMP. Interacts with TAP1. Autocleaved. The resulting N-terminal Thr residue of the mature subunit is responsible for the nucleophile proteolytic activity.

The protein resides in the cytoplasm. It is found in the nucleus. The enzyme catalyses Cleavage of peptide bonds with very broad specificity.. Functionally, the proteasome is a multicatalytic proteinase complex which is characterized by its ability to cleave peptides with Arg, Phe, Tyr, Leu, and Glu adjacent to the leaving group at neutral or slightly basic pH. The proteasome has an ATP-dependent proteolytic activity. This subunit is involved in antigen processing to generate class I binding peptides. May participate in the generation of spliced peptides resulting from the ligation of two separate proteasomal cleavage products that are not contiguous in the parental protein. Required for adipocyte differentiation. The sequence is that of Proteasome subunit beta type-8 (Psmb8) from Rattus norvegicus (Rat).